The sequence spans 345 residues: N-acetyl-gamma-glutamyl-phosphate reductase (345 aa).

The active site involves Cys-149.

Belongs to the NAGSA dehydrogenase family. Type 1 subfamily.

Its subcellular location is the cytoplasm. It carries out the reaction N-acetyl-L-glutamate 5-semialdehyde + phosphate + NADP(+) = N-acetyl-L-glutamyl 5-phosphate + NADPH + H(+). The protein operates within amino-acid biosynthesis; L-arginine biosynthesis; N(2)-acetyl-L-ornithine from L-glutamate: step 3/4. Its function is as follows. Catalyzes the NADPH-dependent reduction of N-acetyl-5-glutamyl phosphate to yield N-acetyl-L-glutamate 5-semialdehyde. The sequence is that of N-acetyl-gamma-glutamyl-phosphate reductase from Bacillus mycoides (strain KBAB4) (Bacillus weihenstephanensis).